Reading from the N-terminus, the 229-residue chain is Flagellar L-ring protein (229 aa).

The first 23 residues, 1–23 (MSPLTRIALALAASAALVLALTA), serve as a signal peptide directing secretion. Cys-24 carries the N-palmitoyl cysteine lipid modification. Cys-24 carries the S-diacylglycerol cysteine lipid modification.

Belongs to the FlgH family. In terms of assembly, the basal body constitutes a major portion of the flagellar organelle and consists of four rings (L,P,S, and M) mounted on a central rod.

Its subcellular location is the cell outer membrane. The protein resides in the bacterial flagellum basal body. Assembles around the rod to form the L-ring and probably protects the motor/basal body from shearing forces during rotation. The protein is Flagellar L-ring protein of Anaeromyxobacter dehalogenans (strain 2CP-C).